Reading from the N-terminus, the 287-residue chain is Ribosomal RNA-processing protein 8 (287 aa).

The disordered stretch occupies residues 1–62; the sequence is MTTEENKTSR…SAPSKRPKPS (62 aa). The segment covering 9–21 has biased composition (basic residues); sequence SRNRKRKRQRNPK. A compositionally biased stretch (basic and acidic residues) spans 35–46; sequence QNEKKNQRDTKN. Positions 107, 142, 160, 172, 173, and 189 each coordinate S-adenosyl-L-methionine.

This sequence belongs to the methyltransferase superfamily. RRP8 family.

It localises to the nucleus. Its subcellular location is the nucleolus. In terms of biological role, probable methyltransferase required to silence rDNA. The sequence is that of Ribosomal RNA-processing protein 8 from Arabidopsis thaliana (Mouse-ear cress).